A 780-amino-acid polypeptide reads, in one-letter code: Cullin-5 (780 aa).

Ser-34 bears the Phosphoserine mark. Thr-210 is modified (phosphothreonine). In terms of domain architecture, Cullin neddylation spans 711–772; that stretch reads RILRTQEAII…HKYIRRDEAD (62 aa). Lys-724 participates in a covalent cross-link: Glycyl lysine isopeptide (Lys-Gly) (interchain with G-Cter in NEDD8).

It belongs to the cullin family. Component of multiple cullin-5-RING E3 ubiquitin-protein ligase complexes (ECS complexes, also named CRL5 complexes) formed of CUL5, Elongin BC (ELOB and ELOC), RNF7/RBX2 and a variable SOCS box domain-containing protein as substrate-specific recognition component. CUL5-containing ECS complexes specifically contain RNF7/RBX2, and not RBX1, as catalytic subunit. Component of the ECS(ASB2) complex with the substrate recognition component ASB2. Component of the ECS(ASB6) complex with the substrate recognition component ASB6. Component of the ECS(ASB7) complex with the substrate recognition component ASB7. Component of the ECS(ASB9) complex with the substrate recognition component ASB9. Component of the ECS(ASB11) complex with the substrate recognition component ASB11. Component of the ECS(ASB12) complex with the substrate recognition component ASB12. Component of the ECS(LRRC41) complex with the substrate recognition component LRRC41. Component of the ECS(SOCS1) complex with the substrate recognition component SOCS1. Component of the ECS(SOCS2) complex with the substrate recognition component SOCS2. Component of the ECS(WSB1) complex with the substrate recognition subunit WSB1. Component of the ECS(SOCS3) complex with the substrate recognition component SOCS3. Component of the ECS(SOCS7) complex with the substrate recognition component SOCS7. Component of the ECS(SPSB1) complex with the substrate recognition component SPSB1. Component of the ECS(SPSB3) complex with the substrate recognition component SPSB3. Component of the ECS(SPSB2) complex with the substrate recognition component SPSB2. Component of the ECS(SPSB4) complex with the substrate recognition component SPSB4. Component of the ECS(RAB40) complex with the substrate recognition subunit RAB40A, RAB40B or RAB40C. Component of the ECS(KLHDC1) complex with the substrate recognition component KLHDC1. Component of the ECS(PCMTD1) complex with the substrate recognition subunit PCMTD1. May also form complexes containing RBX1 and ELOA or VHL; additional evidence is however required to confirm this result in vivo. Interacts (when neddylated) with ARIH2; leading to activate the E3 ligase activity of ARIH2. Interacts with ERCC6; the interaction is induced by DNA damaging agents or inhibitors of RNA polymerase II elongation. Interacts with ELOA (via the BC-box). Interacts (unneddylated form) with DCUN1D1, DCUN1D2, DCUN1D3, DCUN1D4 and DCUN1D5; these interactions promote the cullin neddylation. In terms of processing, neddylated; which enhances the ubiquitination activity of ECS complexes and prevents binding of the inhibitor CAND1. Deneddylated via its interaction with the COP9 signalosome (CSN).

The protein resides in the nucleus. It participates in protein modification; protein ubiquitination. Core component of multiple cullin-5-RING E3 ubiquitin-protein ligase complexes (ECS complexes, also named CRL5 complexes), which mediate the ubiquitination and subsequent proteasomal degradation of target proteins. Acts a scaffold protein that contributes to catalysis through positioning of the substrate and the ubiquitin-conjugating enzyme. The functional specificity of the E3 ubiquitin-protein ligase complex depends on the variable SOCS box-containing substrate recognition component. Acts as a key regulator of neuron positioning during cortex development: component of various SOCS-containing ECS complexes, such as the ECS(SOCS7) complex, that regulate reelin signaling by mediating ubiquitination and degradation of DAB1. ECS(SOCS1) seems to direct ubiquitination of JAK2. The ECS(SOCS2) complex mediates the ubiquitination and subsequent proteasomal degradation of phosphorylated EPOR and GHR. The ECS(SPSB3) complex catalyzes ubiquitination of nuclear CGAS. ECS(KLHDC1) complex is part of the DesCEND (destruction via C-end degrons) pathway and mediates ubiquitination and degradation of truncated SELENOS selenoprotein produced by failed UGA/Sec decoding, which ends with a glycine. The ECS(ASB9) complex mediates ubiquitination and degradation of CKB. As part of some ECS complex, promotes 'Lys-11'-linked ubiquitination and degradation of BTRC. As part of a multisubunit ECS complex, polyubiquitinates monoubiquitinated POLR2A. As part of the ECS(RAB40C) complex, mediates ANKRD28 ubiquitination and degradation, thereby regulating protein phosphatase 6 (PP6) complex activity and focal adhesion assembly during cell migration. As part of the ECS(RAB40A) complex, mediates RHOU 'Lys-48'-linked ubiquitination and degradation, thus inhibiting focal adhesion disassembly during cell migration. As part of the ECS(RAB40B) complex, mediates LIMA1/EPLIN and RAP2 ubiquitination, thereby regulating actin cytoskeleton dynamics and stress fiber formation during cell migration. May form a cell surface vasopressin receptor. This is Cullin-5 from Rattus norvegicus (Rat).